The sequence spans 78 residues: Myrmicitoxin-Ta2a (78 aa).

The N-terminal stretch at 1-26 (MKLSFLSLALAIIFVTVLIYAPQAEA) is a signal peptide. Positions 27-56 (KALADAVADADADADAAADAVADALADADA) are excised as a propeptide. Position 77 is a lysine amide (K77).

It belongs to the formicidae venom precursor-01 superfamily. Expressed by the venom gland.

The protein localises to the secreted. Functionally, peptide with toxicity towards insects that may also act as antimicrobial peptide. Causes calcium influx in F11 cells (EC(50)=5.8 nM), possibly by modulating sodium channels (Nav). In vivo, is lethal to insects, but does not show toxicity to vertebrates. Intraplantar injection into mice does not induce spontaneous nocifensive behaviors up to a dose of 200 pmol. The chain is Myrmicitoxin-Ta2a from Tetramorium africanum (Fierce ant).